A 297-amino-acid polypeptide reads, in one-letter code: tRNA pseudouridine synthase B (297 aa).

Aspartate 41 serves as the catalytic Nucleophile.

The protein belongs to the pseudouridine synthase TruB family. Type 1 subfamily.

It catalyses the reaction uridine(55) in tRNA = pseudouridine(55) in tRNA. Its function is as follows. Responsible for synthesis of pseudouridine from uracil-55 in the psi GC loop of transfer RNAs. The polypeptide is tRNA pseudouridine synthase B (Synechococcus sp. (strain CC9311)).